A 1366-amino-acid polypeptide reads, in one-letter code: DNA-directed RNA polymerase subunit beta' (1366 aa).

Residues 1–20 (MTSSKPKKTSRVRKTTKNSK) are compositionally biased toward basic residues. Residues 1–34 (MTSSKPKKTSRVRKTTKNSKKNNPLTMPALAKTP) are disordered. Positions 248, 315, 322, and 325 each coordinate Zn(2+). Positions 1291-1366 (YTVDMPQSPS…LQEEGLLSDE (76 aa)) are disordered. A compositionally biased stretch (polar residues) spans 1295–1305 (MPQSPSVSSTA). Residues 1354–1366 (LEGLQEEGLLSDE) are compositionally biased toward low complexity.

Belongs to the RNA polymerase beta' chain family. RpoC2 subfamily. In terms of assembly, in cyanobacteria the RNAP catalytic core is composed of 2 alpha, 1 beta, 1 beta', 1 gamma and 1 omega subunit. When a sigma factor is associated with the core the holoenzyme is formed, which can initiate transcription. Requires Zn(2+) as cofactor.

The enzyme catalyses RNA(n) + a ribonucleoside 5'-triphosphate = RNA(n+1) + diphosphate. Its function is as follows. DNA-dependent RNA polymerase catalyzes the transcription of DNA into RNA using the four ribonucleoside triphosphates as substrates. The polypeptide is DNA-directed RNA polymerase subunit beta' (Prochlorococcus marinus (strain MIT 9301)).